The sequence spans 861 residues: Importin subunit beta-1 (861 aa).

Position 2 is an N-acetylserine (serine 2). HEAT repeat units follow at residues 3–35 (TAEF…LSND), 37–66 (FLQF…LTLK), 90–129 (PEAK…ELPH), 134–164 (ELMK…YMCE), 177–208 (SNNI…LADS), 219–255 (EGER…MSLY), 260–306 (KPYM…ELAQ), 317–362 (FALS…AQNC), 367–395 (LEPV…AFGS), 402–442 (KVQR…ADSV), 452–484 (LPGV…VEQL), 496–530 (YPAL…MVEY), 536–586 (AETS…VIRK), 592–629 (EPVA…AASL), 634–669 (EKYL…ISNS), 675–713 (RRYS…ASNI), 718–764 (IPYL…IVAG), 773–812 (FPYV…IAAM), and 819–859 (KQFY…KRQL). In terms of domain architecture, Importin N-terminal spans 25–106 (SETQLKKLSN…KTNALTALVS (82 aa)). Phosphoserine is present on serine 836.

It belongs to the importin beta family. Importin beta-1 subfamily. In terms of assembly, forms a complex with the importin alpha subunit (SRP1/KAP60). Interacts with Ran (GSP1); interacts specifically with the GTP-bound form of Ran (GTP-Ran), protecting it from GTP hydrolysis and nucleotide exchange. Interacts with nucleoporin NUP1.

Its subcellular location is the cytoplasm. The protein localises to the nucleus. It is found in the nuclear pore complex. In terms of biological role, importin beta subunit that functions in nuclear protein import through association with the importin alpha subunit, which binds to the classical nuclear localization signal (cNLS) in cargo substrates. Docking of the importin/substrate complex to the nuclear pore complex (NPC) is mediated by importin beta through binding to nucleoporin FxFG repeats and the complex is subsequently translocated through the pore by an energy requiring, Ran-dependent mechanism. At the nucleoplasmic side of the NPC, GTP-Ran binds to importin beta and the three components separate, leading to release of the cargo. Importin alpha and beta are re-exported from the nucleus to the cytoplasm where GTP hydrolysis releases Ran from importin beta. The directionality of nuclear import is thought to be conferred by an asymmetric distribution of the GTP- and GDP-bound forms of Ran between the cytoplasm and nucleus. Mediates the nuclear import of histones H2A and H2B. Mediates the nuclear import of transcription factor GCN4. In Saccharomyces cerevisiae (strain ATCC 204508 / S288c) (Baker's yeast), this protein is Importin subunit beta-1.